The chain runs to 406 residues: MTDTATTPQTTDAPAFPSNRSCPYQLPDGYAQLRDTPGPLHRVTLYDGRQAWVVTKHEAARKLLGDPRLSSNRTDDNFPATSPRFEAVRESPQAFIGLDPPEHGTRRRMTISEFTVKRIKGMRPEVEEVVHGFLDEMLAAGPTADLVSQFALPVPSMVICRLLGVPYADHEFFQDASKRLVQSTDAQSALTARNDLAGYLDGLITQFQTEPGAGLVGALVADQLANGEIDREELISTAMLLLIAGHETTASMTSLSVITLLDHPEQYAALRADRSLVPGAVEELLRYLAIADIAGGRVATADIEVEGHLIRAGEGVIVVNSIANRDGTVYEDPDALDIHRSARHHLAFGFGVHQCLGQNLARLELEVILNALMDRVPTLRLAVPVEQLVLRPGTTIQGVNELPVTW.

Residues 1–15 (MTDTATTPQTTDAPA) are compositionally biased toward low complexity. The segment at 1–24 (MTDTATTPQTTDAPAFPSNRSCPY) is disordered. T81 is a calciol binding site. Residues H103 and R107 each coordinate heme. Residues R193, S236, and I293 each coordinate calciol. Heme is bound by residues R297, H353, and C355.

The protein belongs to the cytochrome P450 family. The cofactor is heme.

Its subcellular location is the cytoplasm. The catalysed reaction is calciol + 2 reduced [2Fe-2S]-[ferredoxin] + O2 + 2 H(+) = calcidiol + 2 oxidized [2Fe-2S]-[ferredoxin] + H2O. It catalyses the reaction calcidiol + 2 reduced [2Fe-2S]-[ferredoxin] + O2 + 2 H(+) = calcitriol + 2 oxidized [2Fe-2S]-[ferredoxin] + H2O. Involved in the metabolism of vitamin D3 (calciol) and of a number of sulfonylurea herbicides. Catalyzes the two-step hydroxylation (25- and 1-alpha-hydroxylation) of vitamin D3 (VD3) to yield its active form 1-alpha,25-dihydroxyvitamin D3 (calcitriol). The first step is the hydroxylation of the C-25 position of VD3 to produce 25-hydroxyvitamin D3 (calcidiol). The second reaction is the hydroxylation of the C1-alpha-position of calcidiol to produce calcitriol. It can also hydroxylate vitamin D2. This chain is Vitamin D3 dihydroxylase, found in Streptomyces griseolus.